A 194-amino-acid chain; its full sequence is Orotate phosphoribosyltransferase (194 aa).

116–124 lines the 5-phospho-alpha-D-ribose 1-diphosphate pocket; it reads EDIVTTGLS. Orotate contacts are provided by threonine 120 and arginine 148.

It belongs to the purine/pyrimidine phosphoribosyltransferase family. PyrE subfamily. Homodimer. Mg(2+) is required as a cofactor.

It catalyses the reaction orotidine 5'-phosphate + diphosphate = orotate + 5-phospho-alpha-D-ribose 1-diphosphate. It functions in the pathway pyrimidine metabolism; UMP biosynthesis via de novo pathway; UMP from orotate: step 1/2. In terms of biological role, catalyzes the transfer of a ribosyl phosphate group from 5-phosphoribose 1-diphosphate to orotate, leading to the formation of orotidine monophosphate (OMP). The chain is Orotate phosphoribosyltransferase from Caulobacter vibrioides (strain ATCC 19089 / CIP 103742 / CB 15) (Caulobacter crescentus).